Consider the following 173-residue polypeptide: Lipoprotein signal peptidase (173 aa).

The next 4 membrane-spanning stretches (helical) occupy residues 24–44 (PWLG…IAIL), 55–75 (ITGF…SFLA), 80–100 (WQRW…VWLL), and 105–125 (GQKL…GNVI). Active-site residues include D135 and D153. The chain crosses the membrane as a helical span at residues 145-165 (HWPAFNVADCGICIGAVLLII).

The protein belongs to the peptidase A8 family.

The protein resides in the cell inner membrane. The enzyme catalyses Release of signal peptides from bacterial membrane prolipoproteins. Hydrolyzes -Xaa-Yaa-Zaa-|-(S,diacylglyceryl)Cys-, in which Xaa is hydrophobic (preferably Leu), and Yaa (Ala or Ser) and Zaa (Gly or Ala) have small, neutral side chains.. The protein operates within protein modification; lipoprotein biosynthesis (signal peptide cleavage). Functionally, this protein specifically catalyzes the removal of signal peptides from prolipoproteins. The polypeptide is Lipoprotein signal peptidase (Ralstonia nicotianae (strain ATCC BAA-1114 / GMI1000) (Ralstonia solanacearum)).